Consider the following 359-residue polypeptide: MDPEAFAVVGLRTMGGLEELFEAYGIRYLTASRIAEMGFTANTLLDMKEEELDDMMNSLSHIFRWDLLVGERYGIKAAIRAERRRLLEADDRRHHLHSTDHALLDALSHQGLSEEQVVQHSEKDQLGRAGSGDTAGTSWGAQQQRKKHRHRHHITAMKGAATEEDEEDEEEVEEMRRQREHPFIVTEPGEVARGKKNGLDYLFHLYDQCRDFLLQVQSLAKERGEKCPTKVTNQVFRYAKKAGASYINKPKMRHYVHCYALHCLDEHASNALRKSFKERGENVGAWRQACYHPLVTIAGRRAGWDIDAIFNAHPRLCIWYVPTKLRQLCHAHRHSSASAASSASTSTSAPTAHHLELPY.

The disordered stretch occupies residues 113–170 (SEEQVVQHSEKDQLGRAGSGDTAGTSWGAQQQRKKHRHRHHITAMKGAATEEDEEDEE). Basic residues predominate over residues 144–155 (QRKKHRHRHHIT). 3 DNA-binding regions span residues 179–183 (REHPF), 248–255 (NKPKMRHY), and 320–323 (YVPT). Residues 340–352 (ASSASTSTSAPTA) show a composition bias toward low complexity. Residues 340–359 (ASSASTSTSAPTAHHLELPY) form a disordered region.

The protein belongs to the FLO/LFY family. Expressed strongly in the early floral primordium and then successively in the primordia of sepals, petals, stamens and carpels. Also in the leaf primordia and young leaves.

Its subcellular location is the nucleus. In terms of biological role, probable transcription factor. The polypeptide is Leafy/floricaula homolog FL1 (LF1) (Eucalyptus globulus (Tasmanian blue gum)).